The sequence spans 214 residues: MENVGDGSAAAPVDSYRLTEEIQLEKNKKEMLQMSTFELKNTIAELEQRLNSVEDEGNEWKTRYETQIELNKQLERQIYILREKSENIRGNPTDRLSSIRSLDQMPVGALNQFVKHLDDEKILLENQLKNFELRIEQEAKAYYKVNNERRMYISEIAQTSVTQEAAKKQQSDPAHATREKPAFKAKYNGLAKRRTMTKRRGGMTKGSHPSNMKH.

A coiled-coil region spans residues 30–144 (EMLQMSTFEL…IEQEAKAYYK (115 aa)). The segment at 161–214 (VTQEAAKKQQSDPAHATREKPAFKAKYNGLAKRRTMTKRRGGMTKGSHPSNMKH) is disordered. The segment covering 165-182 (AAKKQQSDPAHATREKPA) has biased composition (basic and acidic residues). Residues 191–202 (AKRRTMTKRRGG) show a composition bias toward basic residues.

This sequence belongs to the CCDC169 family.

This is Coiled-coil domain-containing protein 169 (ccdc169) from Xenopus laevis (African clawed frog).